A 240-amino-acid chain; its full sequence is (DL)-glycerol-3-phosphatase 2 (240 aa).

The Nucleophile role is filled by Asp20. Residues Asp20, Asp22, and Asp185 each contribute to the Mg(2+) site. Residue Asp22 is the Proton donor of the active site.

The protein belongs to the HAD-like hydrolase superfamily. DOG/GPP family. Requires Mg(2+) as cofactor. In terms of tissue distribution, ubiquitous with highest expression in siliques. Mainly restricted to the meristem of immature flower and vascular elements of the root, shoot, leave, siliqua and developing embryo (at the protein level).

The protein localises to the cytoplasm. It carries out the reaction sn-glycerol 1-phosphate + H2O = glycerol + phosphate. It catalyses the reaction sn-glycerol 3-phosphate + H2O = glycerol + phosphate. Acts as a glycerol-3-phosphatase with higher stereospecificity for L-glycerol-3-phosphate than DL-glycerol-3-phosphate. The chain is (DL)-glycerol-3-phosphatase 2 (GPP2) from Arabidopsis thaliana (Mouse-ear cress).